A 226-amino-acid chain; its full sequence is Protein-L-isoaspartate(D-aspartate) O-methyltransferase (226 aa).

S-adenosyl-L-homocysteine is bound by residues 57–60 (VTIS), histidine 65, serine 89, 115–116 (EH), 147–148 (DG), and threonine 222. Serine 60 is a catalytic residue.

The protein belongs to the methyltransferase superfamily. L-isoaspartyl/D-aspartyl protein methyltransferase family. In terms of assembly, monomer.

The protein resides in the cytoplasm. It localises to the cytosol. The enzyme catalyses [protein]-L-isoaspartate + S-adenosyl-L-methionine = [protein]-L-isoaspartate alpha-methyl ester + S-adenosyl-L-homocysteine. Functionally, initiates the repair of damaged proteins by catalyzing methyl esterification of L-isoaspartyl and D-aspartyl residues produced by spontaneous isomerization and racemization of L-aspartyl and L-asparaginyl residues in aging peptides and proteins. The chain is Protein-L-isoaspartate(D-aspartate) O-methyltransferase (Pcmt) from Drosophila melanogaster (Fruit fly).